The primary structure comprises 689 residues: Methionine--tRNA ligase (689 aa).

Positions 15-25 (PYANGPIHLGH) match the 'HIGH' region motif. Zn(2+) contacts are provided by Cys146, Cys149, Cys159, and Cys162. A 'KMSKS' region motif is present at residues 332–336 (KMSKS). Residue Lys335 participates in ATP binding. The tRNA-binding domain occupies 588–689 (DFAKIDLRIA…EGAQPGMRVK (102 aa)).

Belongs to the class-I aminoacyl-tRNA synthetase family. MetG type 1 subfamily. Homodimer. The cofactor is Zn(2+).

Its subcellular location is the cytoplasm. It carries out the reaction tRNA(Met) + L-methionine + ATP = L-methionyl-tRNA(Met) + AMP + diphosphate. In terms of biological role, is required not only for elongation of protein synthesis but also for the initiation of all mRNA translation through initiator tRNA(fMet) aminoacylation. This Shewanella baltica (strain OS155 / ATCC BAA-1091) protein is Methionine--tRNA ligase.